Consider the following 223-residue polypeptide: Histone H1.5 (223 aa).

The span at 1–14 (MSETAPAETAAPAP) shows a compositional bias: low complexity. The tract at residues 1–56 (MSETAPAETAAPAPVEKSPAKKKTTKKAGAAKRKATGPPVSELITKAVSASKERGG) is disordered. N-acetylserine is present on S2. At S2 the chain carries Phosphoserine. K17 is subject to N6-acetyllysine. S18 bears the Phosphoserine mark. Over residues 20-35 (AKKKTTKKAGAAKRKA) the composition is skewed to basic residues. K27 bears the N6-methyllysine mark. K34 bears the N6-(beta-hydroxybutyryl)lysine; alternate mark. K34 carries the N6-succinyllysine; alternate modification. T36 carries the phosphothreonine modification. In terms of domain architecture, H15 spans 36–109 (TGPPVSELIT…GASGSFKLNK (74 aa)). N6-acetyllysine is present on K46. K52 is modified (N6-(beta-hydroxybutyryl)lysine). Citrulline is present on R54. At K64 the chain carries N6-(beta-hydroxybutyryl)lysine. N6-acetyllysine is present on K75. N6-(beta-hydroxybutyryl)lysine occurs at positions 85, 90, and 106. The tract at residues 91 to 223 (GTLVQTKGTG…KAKKAVSKKK (133 aa)) is disordered. A compositionally biased stretch (basic residues) spans 119-130 (KAKKTGAAKAKK). T135 and T152 each carry phosphothreonine. The span at 137-158 (KKPKKTAGAKKTVKKTPKKAKK) shows a compositional bias: basic residues. K165 carries the post-translational modification N6-acetyllysine. Basic residues predominate over residues 166-184 (KVAKSPKKAKAAAKPKKAA). 2 positions are modified to phosphoserine: S170 and S186. Residues 191–223 (KAVKSKASKPKVTKPKTAKPKAAKAKKAVSKKK) are compositionally biased toward basic residues.

The protein belongs to the histone H1/H5 family. Interacts with MSX1. In terms of processing, H1 histones are progressively phosphorylated during the cell cycle, becoming maximally phosphorylated during late G2 phase and M phase, and being dephosphorylated sharply thereafter. Post-translationally, citrullination at Arg-54 (H1R54ci) by PADI4 takes place within the DNA-binding site of H1 and results in its displacement from chromatin and global chromatin decondensation, thereby promoting pluripotency and stem cell maintenance. Hydroxybutyrylation of histones is induced by starvation.

The protein resides in the nucleus. Its subcellular location is the chromosome. In terms of biological role, histone H1 protein binds to linker DNA between nucleosomes forming the macromolecular structure known as the chromatin fiber. Histones H1 are necessary for the condensation of nucleosome chains into higher-order structured fibers. Also acts as a regulator of individual gene transcription through chromatin remodeling, nucleosome spacing and DNA methylation. The polypeptide is Histone H1.5 (H1-5) (Mus musculus (Mouse)).